Here is a 106-residue protein sequence, read N- to C-terminus: NADH dehydrogenase [ubiquinone] 1 beta subcomplex subunit 10-B (106 aa).

A disordered region spans residues 1-25 (MGRKKGLPEFEESAPDGFDPENPYK).

This sequence belongs to the complex I NDUFB10 subunit family. Complex I is composed of at least 49 different subunits.

Its subcellular location is the mitochondrion inner membrane. Accessory subunit of the mitochondrial membrane respiratory chain NADH dehydrogenase (Complex I), that is believed not to be involved in catalysis. Complex I functions in the transfer of electrons from NADH to the respiratory chain. The immediate electron acceptor for the enzyme is believed to be ubiquinone. The chain is NADH dehydrogenase [ubiquinone] 1 beta subcomplex subunit 10-B from Arabidopsis thaliana (Mouse-ear cress).